The following is a 379-amino-acid chain: Chaperone protein DnaJ (379 aa).

Residues 7 to 72 form the J domain; the sequence is CYYETLEVER…DKRAAYDRYG (66 aa). The segment at 135 to 213 adopts a CR-type zinc-finger fold; sequence GKTAQIEIPV…CTGSGRVTKE (79 aa). Residues cysteine 148, cysteine 151, cysteine 165, cysteine 168, cysteine 187, cysteine 190, cysteine 201, and cysteine 204 each coordinate Zn(2+). CXXCXGXG motif repeat units follow at residues 148–155, 165–172, 187–194, and 201–208; these read CEACSGTG, CSTCGGAG, CPSCQGRG, and CPSCTGSG.

It belongs to the DnaJ family. In terms of assembly, homodimer. Requires Zn(2+) as cofactor.

It is found in the cytoplasm. Participates actively in the response to hyperosmotic and heat shock by preventing the aggregation of stress-denatured proteins and by disaggregating proteins, also in an autonomous, DnaK-independent fashion. Unfolded proteins bind initially to DnaJ; upon interaction with the DnaJ-bound protein, DnaK hydrolyzes its bound ATP, resulting in the formation of a stable complex. GrpE releases ADP from DnaK; ATP binding to DnaK triggers the release of the substrate protein, thus completing the reaction cycle. Several rounds of ATP-dependent interactions between DnaJ, DnaK and GrpE are required for fully efficient folding. Also involved, together with DnaK and GrpE, in the DNA replication of plasmids through activation of initiation proteins. The protein is Chaperone protein DnaJ of Rhodopseudomonas palustris (strain ATCC BAA-98 / CGA009).